Here is a 276-residue protein sequence, read N- to C-terminus: Omega-amidase NIT2 (276 aa).

Positions 4–248 (FRLALIQLQI…EAIVYSDIDL (245 aa)) constitute a CN hydrolase domain. At Ser-26 the chain carries Phosphoserine. The Proton acceptor role is filled by Glu-43. The residue at position 68 (Lys-68) is an N6-acetyllysine; alternate. An N6-succinyllysine; alternate modification is found at Lys-68. Catalysis depends on Lys-112, which acts as the Proton donor. Lys-123 and Lys-130 each carry N6-succinyllysine. Cys-153 acts as the Nucleophile in catalysis.

As to quaternary structure, homodimer. In terms of tissue distribution, detected in fetal brain (at protein level). Ubiquitous. Detected in heart, brain, placenta, lung, liver, skeletal muscle, kidney, pancreas, prostate, spleen, thymus, prostate, testis, ovary, small intestine and colon.

The protein resides in the cytoplasm. The enzyme catalyses a monoamide of a dicarboxylate + H2O = a dicarboxylate + NH4(+). It carries out the reaction 2-oxoglutaramate + H2O = 2-oxoglutarate + NH4(+). It catalyses the reaction 2-oxosuccinamate + H2O = oxaloacetate + NH4(+). In terms of biological role, has omega-amidase activity. The role of omega-amidase is to remove potentially toxic intermediates by converting 2-oxoglutaramate and 2-oxosuccinamate to biologically useful 2-oxoglutarate and oxaloacetate, respectively. The protein is Omega-amidase NIT2 (NIT2) of Homo sapiens (Human).